Consider the following 1063-residue polypeptide: Integrin alpha-8 (1063 aa).

Residues 1-38 (MSPGASRGPRGSQAPLIAPLCCAAAALGMLLWSPACQA) form the signal peptide. Over 39–1012 (FNLDVEKLTV…TPNVSFSIPL (974 aa)) the chain is Extracellular. FG-GAP repeat units follow at residues 44 to 105 (EKLT…GSAQ), 122 to 183 (NGTK…AYAE), 188 to 240 (RNSN…IANY), 253 to 306 (KQTE…STDM), 307 to 372 (TFIQ…LLFR), 373 to 431 (DPQI…GLNT), and 435 to 498 (QVLQ…LHPM). Asn-81 is a glycosylation site (N-linked (GlcNAc...) asparagine). A disulfide bond links Cys-96 and Cys-106. An N-linked (GlcNAc...) asparagine glycan is attached at Asn-122. Cys-150 and Cys-171 form a disulfide bridge. Asn-177 carries N-linked (GlcNAc...) asparagine glycosylation. Residues Cys-187 and Cys-200 are joined by a disulfide bond. Asn-239 carries an N-linked (GlcNAc...) asparagine glycan. Residues Glu-275, Thr-277, Asp-279, and Glu-283 each contribute to the Ca(2+) site. Residues Asn-302 and Asn-311 are each glycosylated (N-linked (GlcNAc...) asparagine). Ca(2+) is bound by residues Asp-329, Asn-331, Asp-333, Leu-335, Asp-337, Asp-395, Asn-397, Asp-399, Tyr-401, and Asp-403. Residues 455–457 (RGD) carry the Cell attachment site motif. 5 residues coordinate Ca(2+): Asp-459, Asp-461, Asn-463, Tyr-465, and Asp-467. N-linked (GlcNAc...) asparagine glycosylation occurs at Asn-504. Cystine bridges form between Cys-507–Cys-518 and Cys-524–Cys-580. Residues Asn-601 and Asn-605 are each glycosylated (N-linked (GlcNAc...) asparagine). Cystine bridges form between Cys-641–Cys-647 and Cys-713–Cys-726. 6 N-linked (GlcNAc...) asparagine glycosylation sites follow: Asn-719, Asn-737, Asn-753, Asn-780, Asn-896, and Asn-923. Cystine bridges form between Cys-867–Cys-924 and Cys-929–Cys-934. Asn-1005 carries an N-linked (GlcNAc...) asparagine glycan. A helical transmembrane segment spans residues 1013-1033 (WVIILAILLGLLVLAILTLAL). Residues 1034–1063 (WKCGFFDRARPPQEDMTDREQLTNDKTPEA) are Cytoplasmic-facing.

This sequence belongs to the integrin alpha chain family. In terms of assembly, heterodimer of an alpha and a beta subunit. The alpha subunit is composed of a heavy and a light chain linked by a disulfide bond. Alpha-8 associates with beta-1. Expressed in mesenchymal cells, including alveolar myofibroblasts, kidney mesangial cells and hepatic stellar cells and vascular and visceral smooth muscle (at protein level).

The protein resides in the membrane. It is found in the cell membrane. In terms of biological role, integrin alpha-8/beta-1 functions in the genesis of kidney and probably of other organs by regulating the recruitment of mesenchymal cells into epithelial structures. It recognizes the sequence R-G-D in a wide array of ligands including TNC, FN1, SPP1 TGFB1, TGFB3 and VTN. NPNT is probably its functional ligand in kidney genesis. Neuronal receptor for TNC it mediates cell-cell interactions and regulates neurite outgrowth of sensory and motor neurons. The chain is Integrin alpha-8 (ITGA8) from Homo sapiens (Human).